Reading from the N-terminus, the 428-residue chain is Adenylosuccinate synthetase (428 aa).

GTP contacts are provided by residues 12–18 and 40–42; these read GDEGKGK and GHT. Asp13 (proton acceptor) is an active-site residue. Residues Asp13 and Gly40 each contribute to the Mg(2+) site. IMP contacts are provided by residues 13 to 16, 38 to 41, Thr128, Arg142, Gln223, Thr238, and Arg302; these read DEGK and NAGH. Residue His41 is the Proton donor of the active site. 298–304 is a substrate binding site; sequence TTTGRPR. GTP is bound by residues Arg304, 330 to 332, and 412 to 414; these read SID and SVG.

It belongs to the adenylosuccinate synthetase family. Homodimer. It depends on Mg(2+) as a cofactor.

The protein resides in the cytoplasm. It carries out the reaction IMP + L-aspartate + GTP = N(6)-(1,2-dicarboxyethyl)-AMP + GDP + phosphate + 2 H(+). Its pathway is purine metabolism; AMP biosynthesis via de novo pathway; AMP from IMP: step 1/2. Plays an important role in the de novo pathway of purine nucleotide biosynthesis. Catalyzes the first committed step in the biosynthesis of AMP from IMP. This Geobacillus kaustophilus (strain HTA426) protein is Adenylosuccinate synthetase.